The sequence spans 224 residues: Putative carbamate hydrolase RutD (224 aa).

In terms of domain architecture, AB hydrolase-1 spans 14–115 (PVVVLISGLG…TVLVSVNGWL (102 aa)).

Belongs to the AB hydrolase superfamily. Hydrolase RutD family.

The enzyme catalyses carbamate + 2 H(+) = NH4(+) + CO2. Functionally, involved in pyrimidine catabolism. May facilitate the hydrolysis of carbamate, a reaction that can also occur spontaneously. The polypeptide is Putative carbamate hydrolase RutD (Shigella dysenteriae serotype 1 (strain Sd197)).